Consider the following 494-residue polypeptide: NADH-quinone oxidoreductase subunit N 2 (494 aa).

The next 14 helical transmembrane spans lie at L14–L34, I45–A65, V82–L102, I116–T136, L139–F159, F174–V194, L214–F234, F262–W282, W289–L309, L317–T337, L344–I364, A388–A408, A422–Y442, and I470–M490.

This sequence belongs to the complex I subunit 2 family. NDH-1 is composed of 14 different subunits. Subunits NuoA, H, J, K, L, M, N constitute the membrane sector of the complex.

The protein resides in the cell inner membrane. The enzyme catalyses a quinone + NADH + 5 H(+)(in) = a quinol + NAD(+) + 4 H(+)(out). Functionally, NDH-1 shuttles electrons from NADH, via FMN and iron-sulfur (Fe-S) centers, to quinones in the respiratory chain. The immediate electron acceptor for the enzyme in this species is believed to be ubiquinone. Couples the redox reaction to proton translocation (for every two electrons transferred, four hydrogen ions are translocated across the cytoplasmic membrane), and thus conserves the redox energy in a proton gradient. This chain is NADH-quinone oxidoreductase subunit N 2, found in Acidobacterium capsulatum (strain ATCC 51196 / DSM 11244 / BCRC 80197 / JCM 7670 / NBRC 15755 / NCIMB 13165 / 161).